Reading from the N-terminus, the 103-residue chain is MYAVFQSGGKQHRVAPGHTVRLEKLEVATGSTVEFDQVLLIADGEKVHVGAPLVAGGKVVAEVVSHGRGEKVTIVKFRRRKHHDKKLGHRQWFTEVKITAINA.

The protein belongs to the bacterial ribosomal protein bL21 family. Part of the 50S ribosomal subunit. Contacts protein L20.

Functionally, this protein binds to 23S rRNA in the presence of protein L20. The polypeptide is Large ribosomal subunit protein bL21 (Shewanella sp. (strain ANA-3)).